A 119-amino-acid polypeptide reads, in one-letter code: Holo-[acyl-carrier-protein] synthase (119 aa).

Residues D8 and E59 each coordinate Mg(2+).

The protein belongs to the P-Pant transferase superfamily. AcpS family. Mg(2+) serves as cofactor.

It localises to the cytoplasm. The catalysed reaction is apo-[ACP] + CoA = holo-[ACP] + adenosine 3',5'-bisphosphate + H(+). Transfers the 4'-phosphopantetheine moiety from coenzyme A to a Ser of acyl-carrier-protein. The sequence is that of Holo-[acyl-carrier-protein] synthase from Lactococcus lactis subsp. lactis (strain IL1403) (Streptococcus lactis).